We begin with the raw amino-acid sequence, 306 residues long: MPISSHSHSGQFCLHAQGKLEDVIQEAIQQGFQSFSFTEHTPRDRVEDLYPEELHLQPEDLFKTFDEYVNEARRLKQNYGDQINILIGAETEYIRPESVELLKSLNTKYNLDYFVGSVHHVNSIPIDFSPELWQKALQHVGNNPEQLFIDYFEHQYDLMQRLHPLVIGHFDLICLFAPEDAKEVFKNSKSVWELIQRNIKYAVSYGGIFEINTSAFRKGWKTAYPQQRLLELMVEQGAQLTLSDDSHGPHQVGLNYHLAKSYLDKCGITSLCMIEKGPDGNGTVVKNVTVDNVWSKFVGTNGITNT.

Belongs to the PHP hydrolase family. HisK subfamily.

It catalyses the reaction L-histidinol phosphate + H2O = L-histidinol + phosphate. The protein operates within amino-acid biosynthesis; L-histidine biosynthesis; L-histidine from 5-phospho-alpha-D-ribose 1-diphosphate: step 8/9. The polypeptide is Probable histidinol-phosphatase (Schizosaccharomyces pombe (strain 972 / ATCC 24843) (Fission yeast)).